The sequence spans 255 residues: Acetylglutamate kinase (255 aa).

Substrate-binding positions include 40–41 (GG), Arg62, and Asn153.

The protein belongs to the acetylglutamate kinase family. ArgB subfamily.

Its subcellular location is the cytoplasm. The catalysed reaction is N-acetyl-L-glutamate + ATP = N-acetyl-L-glutamyl 5-phosphate + ADP. It functions in the pathway amino-acid biosynthesis; L-arginine biosynthesis; N(2)-acetyl-L-ornithine from L-glutamate: step 2/4. Catalyzes the ATP-dependent phosphorylation of N-acetyl-L-glutamate. The polypeptide is Acetylglutamate kinase (Bacillus cereus (strain 03BB102)).